Consider the following 121-residue polypeptide: Type II secretion system protein I (121 aa).

A propeptide spans 1 to 6 (MRRQKG) (leader sequence). The residue at position 7 (Met-7) is an N-methylmethionine. The helical transmembrane segment at 7–27 (MTLVEVLVALSVFALAGIAVL) threads the bilayer.

It belongs to the GSP I family. As to quaternary structure, type II secretion is composed of four main components: the outer membrane complex, the inner membrane complex, the cytoplasmic secretion ATPase and the periplasm-spanning pseudopilus. Interacts with core component OutG. In terms of processing, cleaved by prepilin peptidase. Post-translationally, methylated by prepilin peptidase at the amino group of the N-terminal methionine once the leader sequence is cleaved by prepilin peptidase.

It is found in the cell inner membrane. Its function is as follows. Component of the type II secretion system required for the energy-dependent secretion of extracellular factors such as proteases and toxins from the periplasm. Part of the pseudopilus tip complex that is critical for the recognition and binding of secretion substrates. The protein is Type II secretion system protein I (outI) of Pectobacterium carotovorum subsp. carotovorum (Erwinia carotovora subsp. carotovora).